A 347-amino-acid chain; its full sequence is Ribosomal RNA small subunit methyltransferase C (347 aa).

Belongs to the methyltransferase superfamily. RsmC family. As to quaternary structure, monomer.

It is found in the cytoplasm. It catalyses the reaction guanosine(1207) in 16S rRNA + S-adenosyl-L-methionine = N(2)-methylguanosine(1207) in 16S rRNA + S-adenosyl-L-homocysteine + H(+). In terms of biological role, specifically methylates the guanine in position 1207 of 16S rRNA in the 30S particle. The sequence is that of Ribosomal RNA small subunit methyltransferase C from Serratia proteamaculans (strain 568).